The sequence spans 138 residues: Spermatid nuclear transition protein 4 (138 aa).

The segment covering 1–11 has biased composition (basic and acidic residues); it reads AKVSRKPREPR. The segment at 1–138 is disordered; the sequence is AKVSRKPREP…QGVTRRGRRY (138 aa). Ser4 is modified (phosphoserine; by PKC). Residues 5 to 23 carry the Nuclear localization signal motif; sequence RKPREPRTAVTQSTRRIKR. Basic residues-rich tracts occupy residues 19–34, 43–57, and 65–74; these read RRIK…RSRG, MKIK…RRKI, and KKAKKARKHF. Thr26 carries the post-translational modification Phosphothreonine; by PKA. Positions 54–72 match the Nuclear localization signal motif; sequence RRKIQTSAGQPKKAKKARK. Residues 86-101 are compositionally biased toward low complexity; sequence NKKTNQNKRQNQNKRQ. The segment covering 120 to 131 has biased composition (polar residues); that stretch reads PTTSCKWCSQGV.

Its subcellular location is the nucleus. The protein localises to the chromosome. Functionally, involved in nuclear basic protein transition: histones are replaced by spermatid specific proteins which are themselves replaced by protamines in late spermatids. The polypeptide is Spermatid nuclear transition protein 4 (TNP4) (Sus scrofa (Pig)).